Reading from the N-terminus, the 486-residue chain is Pup--protein ligase (486 aa).

Glu-33 contributes to the Mg(2+) binding site. Arg-76 serves as a coordination point for ATP. Position 78 (Tyr-78) interacts with Mg(2+). Asp-80 acts as the Proton acceptor in catalysis. Glu-86 is a binding site for Mg(2+). 2 residues coordinate ATP: Thr-89 and Trp-451.

This sequence belongs to the Pup ligase/Pup deamidase family. Pup-conjugating enzyme subfamily.

It catalyses the reaction ATP + [prokaryotic ubiquitin-like protein]-L-glutamate + [protein]-L-lysine = ADP + phosphate + N(6)-([prokaryotic ubiquitin-like protein]-gamma-L-glutamyl)-[protein]-L-lysine.. It participates in protein degradation; proteasomal Pup-dependent pathway. The protein operates within protein modification; protein pupylation. In terms of biological role, catalyzes the covalent attachment of the prokaryotic ubiquitin-like protein modifier Pup to the proteasomal substrate proteins, thereby targeting them for proteasomal degradation. This tagging system is termed pupylation. The ligation reaction involves the side-chain carboxylate of the C-terminal glutamate of Pup and the side-chain amino group of a substrate lysine. The polypeptide is Pup--protein ligase (Bifidobacterium longum (strain DJO10A)).